Consider the following 298-residue polypeptide: Inosose dehydratase (298 aa).

It belongs to the IolE/MocC family. Requires glutathione as cofactor. It depends on Co(2+) as a cofactor. Mn(2+) is required as a cofactor.

It catalyses the reaction scyllo-inosose = 3D-3,5/4-trihydroxycyclohexane-1,2-dione + H2O. Functionally, catalyzes the dehydration of inosose (2-keto-myo-inositol, 2KMI or 2,4,6/3,5-pentahydroxycyclohexanone) to 3D-(3,5/4)-trihydroxycyclohexane-1,2-dione (D-2,3-diketo-4-deoxy-epi-inositol). The polypeptide is Inosose dehydratase (Erwinia tasmaniensis (strain DSM 17950 / CFBP 7177 / CIP 109463 / NCPPB 4357 / Et1/99)).